The chain runs to 281 residues: DegV domain-containing protein (281 aa).

The 278-residue stretch at 3–280 (WKIVSDSGCD…EGGLLMGYEI (278 aa)) folds into the DegV domain. Positions 63 and 91 each coordinate hexadecanoate.

May bind long-chain fatty acids, such as palmitate, and may play a role in lipid transport or fatty acid metabolism. The chain is DegV domain-containing protein from Streptococcus gordonii.